The sequence spans 245 residues: Probable phosphatase YcdX (245 aa).

Residues H7, H9, H15, H40, E73, H101, H131, D192, and H194 each contribute to the Zn(2+) site.

It belongs to the PHP family. As to quaternary structure, homotrimer. Zn(2+) is required as a cofactor.

The chain is Probable phosphatase YcdX from Salmonella heidelberg (strain SL476).